Consider the following 427-residue polypeptide: Peptidase B (427 aa).

Mn(2+) contacts are provided by K195 and D200. Residue K207 is part of the active site. 3 residues coordinate Mn(2+): D218, D277, and E279. The active site involves R281.

This sequence belongs to the peptidase M17 family. In terms of assembly, homohexamer. It depends on Mn(2+) as a cofactor.

Its subcellular location is the cytoplasm. The enzyme catalyses Release of an N-terminal amino acid, Xaa, from a peptide or arylamide. Xaa is preferably Glu or Asp but may be other amino acids, including Leu, Met, His, Cys and Gln.. In terms of biological role, probably plays an important role in intracellular peptide degradation. In Salmonella typhi, this protein is Peptidase B.